The sequence spans 423 residues: Probable efflux pump mfs2 (423 aa).

11 helical membrane passes run 21 to 41, 49 to 69, 79 to 99, 111 to 131, 138 to 158, 220 to 240, 256 to 278, 295 to 315, 319 to 339, 360 to 380, and 392 to 411; these read TMALSVYLLATAFGPLIIGPV, SIFHITNIWFLVWNLVCGFAH, LLAGFGASAVYSLGYGVLGDV, LYLLIPLTGSAVGPIVSGFIV, WMFWSTAILQLTLDLSSLLFH, AILEGIDYGLLYFALSSFSAL, YIVICIGTVSGSQLCGPLMDYAY, IPLLLPGALITPIGFLLYGWA, HLIWVVVDVGAALLSLGMQIF, AATQVLRSLLAFAFPLFSNSL, and LLAFLSIGIALPATGILWRW.

The protein belongs to the major facilitator superfamily.

The protein localises to the membrane. Its function is as follows. Probable efflux pump; part of the gene cluster 27 that mediates the biosynthesis of asparasone A, a sclerotium-specific anthraquinone pigment important for sclerotial survival. The protein is Probable efflux pump mfs2 of Aspergillus flavus (strain ATCC 200026 / FGSC A1120 / IAM 13836 / NRRL 3357 / JCM 12722 / SRRC 167).